Reading from the N-terminus, the 288-residue chain is Fe-S cluster assembly protein dre2 (288 aa).

The segment at 1 to 127 (MSSSVLVLTS…LSRPNQVEAV (127 aa)) is N-terminal SAM-like domain. The linker stretch occupies residues 128–177 (PIKLSNKNGQSASKNKILDFLKSDKENLISGDDDQELIDEDELLDESAHD). [2Fe-2S] cluster is bound by residues Cys185, Cys196, Cys199, and Cys201. The interval 185–201 (CKPEPGKKKRACKNCTC) is fe-S binding site A. [4Fe-4S] cluster contacts are provided by Cys244, Cys247, Cys255, and Cys258. 2 short sequence motifs (cx2C motif) span residues 244–247 (CGNC) and 255–258 (CSGC). Residues 244–258 (CGNCYLGDAFRCSGC) are fe-S binding site B.

It belongs to the anamorsin family. Monomer. Interacts with tah18. Interacts with tim40. [2Fe-2S] cluster serves as cofactor. The cofactor is [4Fe-4S] cluster.

Its subcellular location is the cytoplasm. It localises to the mitochondrion intermembrane space. Functionally, component of the cytosolic iron-sulfur (Fe-S) protein assembly (CIA) machinery required for the maturation of extramitochondrial Fe-S proteins. Part of an electron transfer chain functioning in an early step of cytosolic Fe-S biogenesis, facilitating the de novo assembly of a [4Fe-4S] cluster on the scaffold complex cfd1-nbp35. Electrons are transferred to dre2 from NADPH via the FAD- and FMN-containing protein tah18. Tah18-dre2 are also required for the assembly of the diferric tyrosyl radical cofactor of ribonucleotide reductase (RNR), probably by providing electrons for reduction during radical cofactor maturation in the catalytic small subunit suc22. The chain is Fe-S cluster assembly protein dre2 from Schizosaccharomyces pombe (strain 972 / ATCC 24843) (Fission yeast).